Consider the following 146-residue polypeptide: Prepilin peptidase-dependent protein D (146 aa).

Residues 1 to 6 constitute a propeptide, leader sequence; it reads MDKQRG. Phenylalanine 7 bears the N-methylphenylalanine mark. A helical membrane pass occupies residues 7–27; sequence FTLIELMVVIGIIAILSAIGI.

This sequence belongs to the N-Me-Phe pilin family.

It is found in the fimbrium. The protein localises to the membrane. In terms of biological role, major component of the type IV pilus (T4P) that plays a role in cell adhesion and motility. Not produced when grown under standard laboratory conditions. The protein is Prepilin peptidase-dependent protein D (ppdD) of Escherichia coli (strain K12).